The sequence spans 82 residues: Omega-conotoxin PnVIB (82 aa).

Residues 1-22 (MKLTCMMIVAVLFLTAWTVVTA) form the signal peptide. Residues 23 to 52 (EPHSSNVLENLYLKAHHEMENPEASKLNTR) constitute a propeptide that is removed on maturation. 3 disulfides stabilise this stretch: Cys56–Cys73, Cys63–Cys77, and Cys72–Cys81.

In terms of tissue distribution, expressed by the venom duct.

Its subcellular location is the secreted. Omega-conotoxins act at presynaptic membranes, they bind and block voltage-gated calcium channels (Cav). Acts on high voltage-activated (HVA) calcium currents in molluscan neurons. This chain is Omega-conotoxin PnVIB, found in Conus pennaceus (Feathered cone).